The primary structure comprises 136 residues: Urease subunit beta (136 aa).

The disordered stretch occupies residues Asn113–Ser136.

This sequence belongs to the urease beta subunit family. As to quaternary structure, heterotrimer of UreA (gamma), UreB (beta) and UreC (alpha) subunits. Three heterotrimers associate to form the active enzyme.

The protein localises to the cytoplasm. It catalyses the reaction urea + 2 H2O + H(+) = hydrogencarbonate + 2 NH4(+). It functions in the pathway nitrogen metabolism; urea degradation; CO(2) and NH(3) from urea (urease route): step 1/1. The protein is Urease subunit beta of Staphylococcus aureus (strain Newman).